The chain runs to 539 residues: uncharacterized protein (539 aa).

The protein belongs to the transposase 25 family.

This is an uncharacterized protein from Sinorhizobium fredii (strain NBRC 101917 / NGR234).